Reading from the N-terminus, the 245-residue chain is MIIPALDLIDGVVVRLHQGDYARQRDYGNDPLPRLQDYVAQGAEVLHLVDLTGAKDPANRQISLIKTLVAGVNVPVQIGGGVRTEEDVAALLEAGVARVVVGSTAVKSPEVVKGWFERFGAQALVLALDVRIDEHGNKQVAVSGWQENSGISLEQLVETYLPVGLKHVLCTDISRDGTLAGSNVSLYQEVCARYPQIAFQSSGGIGDIDDIAALRGTGVHGVIVGRALLEGKFTVKEAIQCWQNA.

The active-site Proton acceptor is the Asp7. Asp129 (proton donor) is an active-site residue.

This sequence belongs to the HisA/HisF family.

The protein localises to the cytoplasm. It carries out the reaction 1-(5-phospho-beta-D-ribosyl)-5-[(5-phospho-beta-D-ribosylamino)methylideneamino]imidazole-4-carboxamide = 5-[(5-phospho-1-deoxy-D-ribulos-1-ylimino)methylamino]-1-(5-phospho-beta-D-ribosyl)imidazole-4-carboxamide. The protein operates within amino-acid biosynthesis; L-histidine biosynthesis; L-histidine from 5-phospho-alpha-D-ribose 1-diphosphate: step 4/9. The chain is 1-(5-phosphoribosyl)-5-[(5-phosphoribosylamino)methylideneamino] imidazole-4-carboxamide isomerase from Salmonella arizonae (strain ATCC BAA-731 / CDC346-86 / RSK2980).